Consider the following 1193-residue polypeptide: uncharacterized protein (1193 aa).

The N-terminal stretch at methionine 1 to serine 25 is a signal peptide. At aspartate 26–threonine 1172 the chain is on the extracellular side. N-linked (GlcNAc...) asparagine glycans are attached at residues asparagine 90, asparagine 183, asparagine 226, asparagine 265, asparagine 281, asparagine 345, asparagine 357, asparagine 436, asparagine 516, asparagine 552, asparagine 583, asparagine 627, asparagine 712, asparagine 765, asparagine 822, asparagine 938, asparagine 1038, and asparagine 1092. The chain crosses the membrane as a helical span at residues serine 1173–phenylalanine 1193.

The protein localises to the membrane. This is an uncharacterized protein from Dictyostelium discoideum (Social amoeba).